The sequence spans 631 residues: tRNA uridine 5-carboxymethylaminomethyl modification enzyme MnmG (631 aa).

Residue 15–20 (GAGHAG) participates in FAD binding. The interval 214-233 (YSKTEEEPGDKEPRHFSFTS) is disordered. 276 to 290 (GPRYCPSIETKVVRF) is an NAD(+) binding site.

This sequence belongs to the MnmG family. As to quaternary structure, homodimer. Heterotetramer of two MnmE and two MnmG subunits. The cofactor is FAD.

The protein resides in the cytoplasm. In terms of biological role, NAD-binding protein involved in the addition of a carboxymethylaminomethyl (cmnm) group at the wobble position (U34) of certain tRNAs, forming tRNA-cmnm(5)s(2)U34. This chain is tRNA uridine 5-carboxymethylaminomethyl modification enzyme MnmG, found in Lactobacillus delbrueckii subsp. bulgaricus (strain ATCC 11842 / DSM 20081 / BCRC 10696 / JCM 1002 / NBRC 13953 / NCIMB 11778 / NCTC 12712 / WDCM 00102 / Lb 14).